A 1128-amino-acid chain; its full sequence is Apoptosis-stimulating of p53 protein 2 (1128 aa).

2 disordered regions span residues 86 to 106 and 322 to 341; these read PGRD…RNGV and KENL…ASAP. Positions 322-339 are enriched in polar residues; sequence KENLPVSSDGNLPQQAAS. Residues 332–348 are interaction with APPBP1; the sequence is NLPQQAASAPSRVAAVG. Phosphoserine is present on S480. Disordered regions lie at residues 494–598 and 655–706; these read NVAK…LPPF and NQQQ…LPFL. Positions 528–537 are enriched in polar residues; sequence GSSQQLSTVV. Phosphoserine occurs at positions 556, 569, 572, and 576. Over residues 558 to 575 the composition is skewed to polar residues; sequence SIPSVGQDQTLSPGSKQE. A compositionally biased stretch (polar residues) spans 655-670; the sequence is NQQQHPENIYSNSQGK. Residues S698, S714, and S737 each carry the phosphoserine modification. Disordered regions lie at residues 724-748 and 802-909; these read KLSN…NGPN and SLVP…TNLR. Low complexity predominate over residues 840–849; sequence NSPNLQNNPE. The SH3-binding signature appears at 866 to 875; sequence YPPYPPPPYP. Over residues 867–876 the composition is skewed to pro residues; the sequence is PPYPPPPYPS. The tract at residues 876–1128 is mediates interaction with APC2; the sequence is SGEPEGPGED…RIKPRQRSLA (253 aa). ANK repeat units lie at residues 926–957, 958–990, 991–1024, and 1025–1067; these read PLAL…LPND, EGIT…AADS, DGWT…MTYS, and DMQT…ALWD. The 63-residue stretch at 1057 to 1119 folds into the SH3 domain; sequence MNKGVIYALW…PRNLLGLYPR (63 aa).

The protein belongs to the ASPP family. Interacts with P53/TP53; the interaction promotes pro-apoptotic activity. Interacts with BCL2. Interacts with protein phosphatase 1. Interacts with RELA NF-kappa-B subunit. This interaction probably prevents the activation of apoptosis, possibly by preventing its interaction with TP53. Interacts with APC2 and NAE1. Interacts with DDX42 (via the C-terminus); the interaction is not inhibited by TP53BP2 ubiquitination and is independent of p53/TP53. Widely expressed. Expressed in spleen, thymus, prostate, testis, ovary, small intestine, colon and peripheral blood leukocyte. Reduced expression in breast carcinomas expressing a wild-type TP53 protein. Overexpressed in lung cancer cell lines.

The protein resides in the cytoplasm. The protein localises to the perinuclear region. Its subcellular location is the nucleus. Regulator that plays a central role in regulation of apoptosis and cell growth via its interactions with proteins such as TP53. Regulates TP53 by enhancing the DNA binding and transactivation function of TP53 on the promoters of proapoptotic genes in vivo. Inhibits the ability of NAE1 to conjugate NEDD8 to CUL1, and thereby decreases NAE1 ability to induce apoptosis. Impedes cell cycle progression at G2/M. Its apoptosis-stimulating activity is inhibited by its interaction with DDX42. This Homo sapiens (Human) protein is Apoptosis-stimulating of p53 protein 2 (TP53BP2).